A 260-amino-acid chain; its full sequence is Transcription factor SUM-1 (260 aa).

The bHLH domain occupies 112 to 163; sequence DKRKAATLRERRRLRKVNEAFEALKRHTCANPNQRLPKVEILRNAIEYIEKL. The disordered stretch occupies residues 171 to 208; sequence KANGDSEMDSAETSSNTSDAMTDGSSPGSYSSDKAQQY. Polar residues predominate over residues 181–205; sequence AETSSNTSDAMTDGSSPGSYSSDKA.

In terms of assembly, efficient DNA binding requires dimerization with another bHLH protein. Homodimer, and heterodimer with the ubiquitous bHLH protein E12.

The protein localises to the nucleus. In terms of biological role, regulatory factor during embryogenesis. Conversion of pluripotent secondary mesenchyme cells to myogenic cells. It binds to the MCK enhancer element. The polypeptide is Transcription factor SUM-1 (SUM-1) (Lytechinus variegatus (Green sea urchin)).